Consider the following 519-residue polypeptide: MINDIRRINITTSSIESLNENSKYLKRNHKRTIKICAYAITTFALFFIVVVYFKNQTNVNDANRNTLAAIDETSLMNKEIAYLREILKKYKTKTNENNEYAYEKNDDINGDGEDEHELLLMLHKFLKNKGNPNKIDRFDINNNDSNKNRGNENIDQINILSQKLESMHDNIKYASKFFKYMKEYNKKYKNIDEQLVRFENFKTNYMKVKKHNEMVGKNGITYVQKVNQFSDFSKEELDSYFKKLLPIPHNLKTKHVVPLKTHLDDNKIKPKEGVLDYPEQRDYREWNILLPPKDQGMCGSCWAFASVGNYEALFAKKYSILPISFSEQQVVDCSSDNFGCDGGHPFLSFLYFLNNGVCFGDNYEYKAHDDFFCLSYRCAYRSKLKKIGNAYPYELIMSLNEVGPITVNVGVSDEFVLYSGGIFDGTCASELNHSVLLVGYGKVKRSLVFEDSHTNVDSNLIKNYKENIKDSDDDYLYYWIIRNSWSSTWGEGGYIRIKRNKLGDDVFCGIGIDVFFPIL.

Residues 1 to 32 (MINDIRRINITTSSIESLNENSKYLKRNHKRT) lie on the Cytoplasmic side of the membrane. The chain crosses the membrane as a helical; Signal-anchor for type II membrane protein span at residues 33–53 (IKICAYAITTFALFFIVVVYF). The Lumenal segment spans residues 54–519 (KNQTNVNDAN…IGIDVFFPIL (466 aa)). Residues Asn55 and Asn143 are each glycosylated (N-linked (GlcNAc...) asparagine). Intrachain disulfides connect Cys298/Cys340, Cys333/Cys373, Cys358/Cys378, and Cys427/Cys508. Residue Cys301 is part of the active site. N-linked (GlcNAc...) asparagine glycosylation is present at Asn432. Residues His433 and Asn483 contribute to the active site.

Belongs to the peptidase C1 family.

Its subcellular location is the membrane. Its function is as follows. Cysteine protease. Required for host hepatocyte-derived merozoite infectivity and to a lesser extent for host erythrocyte-derived merozoite infectivity. The protein is Berghepain-1 of Plasmodium berghei (strain Anka).